The following is a 340-amino-acid chain: UDP-3-O-acylglucosamine N-acyltransferase (340 aa).

H238 functions as the Proton acceptor in the catalytic mechanism.

The protein belongs to the transferase hexapeptide repeat family. LpxD subfamily. Homotrimer.

The catalysed reaction is a UDP-3-O-[(3R)-3-hydroxyacyl]-alpha-D-glucosamine + a (3R)-hydroxyacyl-[ACP] = a UDP-2-N,3-O-bis[(3R)-3-hydroxyacyl]-alpha-D-glucosamine + holo-[ACP] + H(+). Its pathway is bacterial outer membrane biogenesis; LPS lipid A biosynthesis. In terms of biological role, catalyzes the N-acylation of UDP-3-O-acylglucosamine using 3-hydroxyacyl-ACP as the acyl donor. Is involved in the biosynthesis of lipid A, a phosphorylated glycolipid that anchors the lipopolysaccharide to the outer membrane of the cell. The polypeptide is UDP-3-O-acylglucosamine N-acyltransferase (Shewanella denitrificans (strain OS217 / ATCC BAA-1090 / DSM 15013)).